The primary structure comprises 503 residues: Maturase K (503 aa).

Belongs to the intron maturase 2 family. MatK subfamily.

The protein localises to the plastid. The protein resides in the chloroplast. Its function is as follows. Usually encoded in the trnK tRNA gene intron. Probably assists in splicing its own and other chloroplast group II introns. The polypeptide is Maturase K (Rhamnus cathartica (Common buckthorn)).